The chain runs to 1502 residues: MIRQCLHLTTSPLLLLLLIALSSIGTVVAKSDGPKIASIQLETEPSMPFYFENSDTVLFLRLDTGEVYQSFDGGVEWKVLGKDHETEGETAGLANGAVMIQAHPYDNQKAYILGRHGVHWVTTDQGKTWREFEVPAAPSMFNEPLRFHGEDSGKVIFQGERCSAFACVETSYYTRNNFETVKPMRDTARGCMWAVATPGFADSTTEHAEEIRDRVLCIVHGLKNPFASAYRLVYSDSFFEDDQDGIEAKLNEGRPVAGIINAAARTKYIVAAAKSQGTDELAMFVTDDAITWHRAEFGNHKIEESAYTVLEGTNYSIEVDVMNTDRSTNMGVLFTSNSNGTYFTRNIEHTNRDMSGLVDFEKIAGVQGIVLVNVVDNWEEIENDPKADRKVISKISFDDGRTFQSLKVKDKDLHLHSVTAFENIGRVFSSPAPGIVMGVGNTGTHLKSYTKDGDLYVSDDAGVTWRLALEKPHKYEIGNKGAIIMAIKDNDKPTKKIQYSINHGKDWETAELDREIIPYFLTTTPDSTSLKFMLVGYVEDPADWYIYAIDFEGLHERECKDSDFENWPARLDENGEPDCLMGHKQFYRRRKSDANCFITETMFKTPKPEFKSCKCTAEDFECDYNFVRSEDRKECVPATILKAPEGTCKNDDDTFKGPSGWRLIPGNVCTRDGAVELDKEIDRPCKDALKTPSGDSKAVSSTANYIETEMFGEFFYLERAGSSRGEDETIIMRTTDGKLYVTHDHGKSWTHELKDVKIQQIAPHRYLNDRAFFLTSGKKQYYTINRAESFDAFSAPAEVNPSGLTLGYHEEFKDWMIWTGPGECSHGECPKVSFISKHRGDDWEILLRAVEKCEFMAREDRKDSGSLIFCDQHEGEKVDGQRMLVTSNDFFATSTTPLTNIIDFATMAEFIIIATRNPEKENSLKVDASVNGVEFADAEFPYNLEVPVQLAYTVLDSSTHSVFLHVTANNKMDQSYGSIIKSNSNGTSYVLSLNDVNRNNGGYVDFEKLPGLEGVALANVVSNTKNVEKGSEKKLTSMITHNDGSQWTLIPPPAKDSEGKPYSCGSDGKPTDKCSLHLHGYTERRDPRDSFGSASAIGLLFGVGNVGESLGSKSEASTFFSSDGGISWKEVKKGNYMWKFGDQGSVLVLVEELKPTRDIYFSTDEGDTWEKYQFSEKEVTVQSLSTVPSGTSKNFLIWGKETGSSKLVTINLDFSGLRDRTCNLDEDTGESEDYYLWEPKHPLQEGNCLFGHVEQYHRKKPSSHCWNDWSEAHVHRISHNCTCTEEDYECDYNYERQTDGSCALVPGLLKPNAIDYCRENPEAIEYWEPTGYRRIPLTTCQGGKNLDRWVSRPCPSHEEEYQRKHGPSGAVIFFAIIVPITIAVAAGYWVYTRWDGKFGQIRLGDGGAQSFVTSRGDSPFITIPVAIIAGTVAAVKVLPLLVMSLWRSVTGYVRIPGRRGPRPYATRDAFAARRGDYTHVVDDEDELLGDDEFEDEEGDERN.

The signal sequence occupies residues 1–29; the sequence is MIRQCLHLTTSPLLLLLLIALSSIGTVVA. The Lumenal portion of the chain corresponds to 30 to 1369; sequence KSDGPKIASI…EYQRKHGPSG (1340 aa). BNR repeat units follow at residues 68-78 and 120-130; these read YQSFDGGVEWK and WVTTDQGKTWR. N-linked (GlcNAc...) asparagine glycans are attached at residues N314 and N339. BNR repeat units lie at residues 395-404, 456-466, 498-508, and 740-750; these read ISFDDGRTFQ, YVSDDAGVTWR, QYSINHGKDWE, and YVTHDHGKSWT. N-linked (GlcNAc...) asparagine glycosylation is present at N985. BNR repeat units lie at residues 1119 to 1129 and 1160 to 1171; these read FFSSDGGISWK and YFSTDEGDTWEK. An N-linked (GlcNAc...) asparagine glycan is attached at N1280. A helical transmembrane segment spans residues 1370–1390; the sequence is AVIFFAIIVPITIAVAAGYWV. At 1391–1422 the chain is on the cytoplasmic side; it reads YTRWDGKFGQIRLGDGGAQSFVTSRGDSPFIT. The helical transmembrane segment at 1423-1443 threads the bilayer; it reads IPVAIIAGTVAAVKVLPLLVM. At 1444–1502 the chain is on the lumenal side; sequence SLWRSVTGYVRIPGRRGPRPYATRDAFAARRGDYTHVVDDEDELLGDDEFEDEEGDERN.

Belongs to the VPS10-related sortilin family.

It is found in the golgi apparatus. Its subcellular location is the trans-Golgi network membrane. The protein resides in the prevacuolar compartment membrane. Functionally, functions as a sorting receptor in the Golgi compartment required for the intracellular sorting and delivery of soluble vacuolar proteins, like carboxypeptidase Y (CPY) and proteinase A. Executes multiple rounds of sorting by cycling between the late Golgi and a prevacuolar endosome-like compartment. The chain is Vacuolar protein sorting/targeting protein 10 (vps10) from Talaromyces stipitatus (strain ATCC 10500 / CBS 375.48 / QM 6759 / NRRL 1006) (Penicillium stipitatum).